The primary structure comprises 503 residues: MSNIGNVEILQIIDSVAREKGISKEILISTVEQAVQAAGRKKYGNEYDIKAQINRKTGEINLLRILKIVEDVEDYLTQISLEEALIKNPEAKIGDEIYEYLPPIDHARVSAQAAKQVITQRVIEAEREKQYHDFKDRKGEIINGIVKRIEYGDIIVDLSRAEAIIKKDQLIKGENFKPNDRIKAYVQDVRQETKGPQIFLSRVDNQMLVKLFKLEVPEILESIIQIKSVARDPGSKAKIAVFAADSSIDPVGSCVGIRGNRVKAVTNELNGEKIDIVLWSNDLAQFIVNALAPLAPGEITKILIDEDRHKVEVVVSQENQSIAIGRRGQNVRLASQLTGWNIDIMTEEQESKRRNEEFLTSTALFMEALDVEEVIGQLLSVTGFNSVEQIASSEISTLTRIEGFEEELAVEIKNRAINYVDLKNEKIIKKLEDLGVEQELIDILELSLELILQFAEYGIKTIEDLGEMSVNEFKNLAPNSNITDENIKLLIKTARQHGALKDS.

Residues 139–203 (GEIINGIVKR…KGPQIFLSRV (65 aa)) form the S1 motif domain. Residues 308 to 378 (RHKVEVVVSQ…LDVEEVIGQL (71 aa)) enclose the KH domain.

It belongs to the NusA family. In terms of assembly, monomer. Binds directly to the core enzyme of the DNA-dependent RNA polymerase and to nascent RNA.

It localises to the cytoplasm. In terms of biological role, participates in both transcription termination and antitermination. This is Transcription termination/antitermination protein NusA from Rickettsia conorii (strain ATCC VR-613 / Malish 7).